The following is a 401-amino-acid chain: Phosphoglycerate kinase (401 aa).

Substrate-binding positions include 26 to 28, Arg-41, 64 to 67, Arg-123, and Arg-156; these read DLN and HLGR. ATP is bound by residues Lys-207, Gly-298, Glu-329, and 355–358; that span reads GGDS.

This sequence belongs to the phosphoglycerate kinase family. In terms of assembly, monomer.

It localises to the cytoplasm. The enzyme catalyses (2R)-3-phosphoglycerate + ATP = (2R)-3-phospho-glyceroyl phosphate + ADP. Its pathway is carbohydrate degradation; glycolysis; pyruvate from D-glyceraldehyde 3-phosphate: step 2/5. The chain is Phosphoglycerate kinase from Bdellovibrio bacteriovorus (strain ATCC 15356 / DSM 50701 / NCIMB 9529 / HD100).